A 207-amino-acid polypeptide reads, in one-letter code: Small ribosomal subunit protein uS4 (207 aa).

The interval 31–55 (KCKLDSKPGQHGRTSGARTSDYGTQ) is disordered. Polar residues predominate over residues 42-53 (GRTSGARTSDYG). Positions 97–160 (SRLDNVVYRM…KKQARIVEAL (64 aa)) constitute an S4 RNA-binding domain.

The protein belongs to the universal ribosomal protein uS4 family. Part of the 30S ribosomal subunit. Contacts protein S5. The interaction surface between S4 and S5 is involved in control of translational fidelity.

Its function is as follows. One of the primary rRNA binding proteins, it binds directly to 16S rRNA where it nucleates assembly of the body of the 30S subunit. In terms of biological role, with S5 and S12 plays an important role in translational accuracy. The sequence is that of Small ribosomal subunit protein uS4 from Burkholderia orbicola (strain MC0-3).